We begin with the raw amino-acid sequence, 216 residues long: Probable GTP-binding protein EngB (216 aa).

The EngB-type G domain occupies 30–204 (DGLEVAFAGR…HDVLARWLGL (175 aa)). Residues 38-45 (GRSNAGKS), 64-68 (GRTQL), 82-85 (DLPG), 149-152 (TKAD), and 182-185 (LFSA) contribute to the GTP site. Mg(2+) contacts are provided by Ser-45 and Thr-66.

The protein belongs to the TRAFAC class TrmE-Era-EngA-EngB-Septin-like GTPase superfamily. EngB GTPase family. Mg(2+) is required as a cofactor.

Necessary for normal cell division and for the maintenance of normal septation. This is Probable GTP-binding protein EngB from Azotobacter vinelandii (strain DJ / ATCC BAA-1303).